The following is a 238-amino-acid chain: UPF0758 protein Ajs_3450 (238 aa).

The region spanning 116 to 238 (VFDSPQAVQH…ALSMAEQGLV (123 aa)) is the MPN domain. Zn(2+) contacts are provided by H187, H189, and D200. The JAMM motif signature appears at 187 to 200 (HNHPSGSVQPSRAD).

Belongs to the UPF0758 family.

The polypeptide is UPF0758 protein Ajs_3450 (Acidovorax sp. (strain JS42)).